The sequence spans 303 residues: Type II methyltransferase M.MjaI (303 aa).

The protein belongs to the N(4)/N(6)-methyltransferase family. N(4) subfamily.

It catalyses the reaction a 2'-deoxycytidine in DNA + S-adenosyl-L-methionine = an N(4)-methyl-2'-deoxycytidine in DNA + S-adenosyl-L-homocysteine + H(+). Functionally, a beta subtype methylase that recognizes the double-stranded sequence 5'-CTAG-3', methylates C-1 on both strands, and protects the DNA from cleavage by the MjaI endonuclease. In Methanocaldococcus jannaschii (strain ATCC 43067 / DSM 2661 / JAL-1 / JCM 10045 / NBRC 100440) (Methanococcus jannaschii), this protein is Type II methyltransferase M.MjaI (mjaIM).